The chain runs to 316 residues: MTVEQKTIGIVGARGHTGSELIKLVAAHPQLHLSFVSSRELAGQRVAEHNDAYQGQLRYENLDAAAVAAKAADVVILALPNGMAEPFVAAIDAAAPQTLVIDLSADYRFDPAWYYGLPELTRGSYAGQKRISNPGCYATAMQLTIAPLLDQLAGPPQCFGVSGYSGAGTTPSDKNNPALLSNNVMPYALTNHMHEREVSAQLGVPVEFMPHVAPHFRGITMTVNLWLQQPLTREQIQARYTQRYADEPLIEIVDEAPWVSRIAGKHGVQIGGVTLAPGNKRVVVVATLDNLLKGAATQAMQNLNLALGWDELMAIR.

Cys-136 is a catalytic residue.

This sequence belongs to the NAGSA dehydrogenase family. Type 1 subfamily.

The protein resides in the cytoplasm. It carries out the reaction N-acetyl-L-glutamate 5-semialdehyde + phosphate + NADP(+) = N-acetyl-L-glutamyl 5-phosphate + NADPH + H(+). It functions in the pathway amino-acid biosynthesis; L-arginine biosynthesis; N(2)-acetyl-L-ornithine from L-glutamate: step 3/4. Functionally, catalyzes the NADPH-dependent reduction of N-acetyl-5-glutamyl phosphate to yield N-acetyl-L-glutamate 5-semialdehyde. The chain is N-acetyl-gamma-glutamyl-phosphate reductase from Xanthomonas euvesicatoria pv. vesicatoria (strain 85-10) (Xanthomonas campestris pv. vesicatoria).